A 129-amino-acid polypeptide reads, in one-letter code: UPF0102 protein Clim_0016 (129 aa).

The protein belongs to the UPF0102 family.

The polypeptide is UPF0102 protein Clim_0016 (Chlorobium limicola (strain DSM 245 / NBRC 103803 / 6330)).